We begin with the raw amino-acid sequence, 536 residues long: Caspase recruitment domain-containing protein 9 (536 aa).

At serine 2 the chain carries Phosphoserine. Positions 3, 10, and 73 each coordinate Zn(2+). One can recognise a CARD domain in the interval asparagine 6–glutamate 98. Residues proline 99–threonine 116 form a linker region. Residues glutamine 117 to lysine 272 adopt a coiled-coil conformation. Lysine 125 participates in a covalent cross-link: Glycyl lysine isopeptide (Lys-Gly) (interchain with G-Cter in ubiquitin). Phosphothreonine; by PKC/PRKCD is present on threonine 231. The residue at position 277 (serine 277) is a Phosphoserine. Positions serine 303 to glutamine 415 form a coiled coil. Serine 424, serine 425, serine 431, serine 451, serine 461, serine 483, and serine 498 each carry phosphoserine. The segment at serine 425–serine 451 is disordered. The disordered stretch occupies residues leucine 476–serine 536. Residues proline 487–tyrosine 502 are compositionally biased toward basic and acidic residues. Phosphothreonine; by CK2 is present on residues threonine 531 and threonine 533.

As to quaternary structure, monomer. Homodimer; homodimerization is mediated by the CARD domain which forms an extensive interaction with the adjacent linker and coiled-coil regions; leads to an autoinhibited state. Homomultimer; polymerizes following activation, forming a nucleating helical template that seeds BCL10-filament formation via a CARD-CARD interaction. Interacts (via CARD domain) with BCL10 (via CARD domain); interaction takes place following CARD9 activation and polymerization, leading to the formation of a filamentous CBM complex assembly. Component of a CBM complex (CARD9-BCL10, MALT1), composed of CARD9, BCL10 and MALT1. Interacts with RASGRF1. Interacts with NOD2 (via NACHT domain); interaction is direct. Interacts with RIPK2. Interacts with VHL; without leading to protein degradation. Post-translationally, phosphorylated at Thr-231 by PRKCD downstream of C-type lectin receptors activation: phosphorylation promotes interaction with BCL10, followed by activation of NF-kappa-B and MAP kinase p38 pathways. Phosphorylated at Thr-531 and Thr-531 by CK2 following interaction with VHL, leading to inhibit the ability to activate NF-kappa-B. Ubiquitinated at Lys-125 via 'Lys-27'-linked ubiquitin by TRIM62 downstream of C-type lectin receptors activation; leading to CARD9 activation, followed by activation of NF-kappa-B and MAP kinase p38 pathways. Deubiquitinated at Lys-125 by USP15, inhibiting CARD9. In terms of tissue distribution, specifically expressed in myeloid cells. Not expressed in non-lymphoid organs.

The protein localises to the cytoplasm. Maintained in an autoinhibited state via homodimerization in which the CARD domain forms an extensive interaction with the adjacent linker and coiled-coil regions. Activation downstream of C-type lectin receptors, by phosphorylation by PRKCD and/or ubiquitination by TRIM62, triggers disruption of the CARD domain-coiled coil interface, CARD9 homooligomerization and BCL10 recruitment, followed by activation of NF-kappa-B and MAP kinase p38 pathways. Zinc-binding inhibits activation by stabilizing the CARD ground-state conformation and restricting its capacity to form BCL10-nucleating filaments. Its function is as follows. Adapter protein that plays a key role in innate immune response against fungi by forming signaling complexes downstream of C-type lectin receptors. CARD9-mediated signals are essential for antifungal immunity against a subset of fungi from the phylum Ascomycota. Transduces signals in myeloid cells downstream of C-type lectin receptors CLEC7A (dectin-1), CLEC6A (dectin-2) and CLEC4E (Mincle), which detect pathogen-associated molecular pattern metabolites (PAMPs), such as fungal carbohydrates, and trigger CARD9 activation. Upon activation, CARD9 homooligomerizes to form a nucleating helical template that recruits BCL10 via CARD-CARD interaction, thereby promoting polymerization of BCL10 and subsequent recruitment of MALT1: this leads to activation of NF-kappa-B and MAP kinase p38 (MAPK11, MAPK12, MAPK13 and/or MAPK14) pathways which stimulate expression of genes encoding pro-inflammatory cytokines and chemokines. CARD9 signaling in antigen-presenting cells links innate sensing of fungi to the activation of adaptive immunity and provides a cytokine milieu that induces the development and subsequent of interleukin 17-producing T helper (Th17) cells. Also involved in activation of myeloid cells via classical ITAM-associated receptors and TLR: required for TLR-mediated activation of MAPK, while it is not required for TLR-induced activation of NF-kappa-B. CARD9 can also be engaged independently of BCL10: forms a complex with RASGRF1 downstream of C-type lectin receptors, which recruits and activates HRAS, leading to ERK activation and the production of cytokines. Acts as an important regulator of the intestinal commensal fungi (mycobiota) component of the gut microbiota. Plays an essential role in antifungal immunity against dissemination of gut fungi: acts by promoting induction of antifungal IgG antibodies response in CX3CR1(+) macrophages to confer protection against disseminated C.albicans or C.auris infection. Also mediates immunity against other pathogens, such as certain bacteria, viruses and parasites; CARD9 signaling is however redundant with other innate immune responses. In response to L.monocytogenes infection, required for the production of inflammatory cytokines activated by intracellular peptidoglycan: acts by connecting NOD2 recognition of peptidoglycan to downstream activation of MAP kinases (MAPK) without activating NF-kappa-B. The sequence is that of Caspase recruitment domain-containing protein 9 from Mus musculus (Mouse).